Here is a 300-residue protein sequence, read N- to C-terminus: N-acetylmannosamine kinase (300 aa).

ATP is bound by residues 5–12 (ALDIGGTK) and 132–139 (GVGGGIVL). 4 residues coordinate Zn(2+): His156, Cys166, Cys168, and Cys173.

This sequence belongs to the ROK (NagC/XylR) family. NanK subfamily. As to quaternary structure, homodimer.

The enzyme catalyses an N-acyl-D-mannosamine + ATP = an N-acyl-D-mannosamine 6-phosphate + ADP + H(+). It functions in the pathway amino-sugar metabolism; N-acetylneuraminate degradation; D-fructose 6-phosphate from N-acetylneuraminate: step 2/5. Its function is as follows. Catalyzes the phosphorylation of N-acetylmannosamine (ManNAc) to ManNAc-6-P. The protein is N-acetylmannosamine kinase of Haemophilus influenzae (strain 86-028NP).